Reading from the N-terminus, the 181-residue chain is Acetolactate synthase small subunit (181 aa).

The 75-residue stretch at 4–78 (TLSVLVEDES…NVLKIQDITN (75 aa)) folds into the ACT domain.

Belongs to the acetolactate synthase small subunit family. Dimer of large and small chains.

The protein localises to the plastid. The protein resides in the chloroplast. It catalyses the reaction 2 pyruvate + H(+) = (2S)-2-acetolactate + CO2. Its pathway is amino-acid biosynthesis; L-isoleucine biosynthesis; L-isoleucine from 2-oxobutanoate: step 1/4. It functions in the pathway amino-acid biosynthesis; L-valine biosynthesis; L-valine from pyruvate: step 1/4. This is Acetolactate synthase small subunit (ilvH) from Galdieria sulphuraria (Red alga).